Consider the following 782-residue polypeptide: General transcription and DNA repair factor IIH helicase/translocase subunit XPB (782 aa).

A compositionally biased stretch (basic and acidic residues) spans 1 to 11; that stretch reads MGKRDRADRDK. Disordered regions lie at residues 1–51 and 218–241; these read MGKR…ESGT and SAIS…PQGK. A Nuclear localization signal motif is present at residues 6–18; it reads RADRDKKKSRKRH. Over residues 21–30 the composition is skewed to acidic residues; the sequence is DEEDDEEDAP. A compositionally biased stretch (polar residues) spans 218–236; sequence SAISKTAESSGGPSTSRVT. In terms of domain architecture, Helicase ATP-binding spans 327 to 488; the sequence is MFGNGRARSG…DLNFLIGPKL (162 aa). 340 to 347 lines the ATP pocket; sequence LPCGAGKS. The DEVH box motif lies at 441–444; the sequence is DEVH. The 161-residue stretch at 542 to 702 folds into the Helicase C-terminal domain; the sequence is RACQFLIKFH…LAGMEEEDLA (161 aa). Arg-642 and Arg-645 together coordinate ATP. Phosphoserine is present on Ser-686. Residue Ser-751 is modified to Phosphoserine; by CK2.

Belongs to the helicase family. RAD25/XPB subfamily. In terms of assembly, component of the 7-subunit TFIIH core complex composed of XPB/ERCC3, XPD/ERCC2, GTF2H1, GTF2H2, GTF2H3, GTF2H4 and GTF2H5, which is active in NER. The core complex associates with the 3-subunit CDK-activating kinase (CAK) module composed of CCNH/cyclin H, CDK7 and MNAT1 to form the 10-subunit holoenzyme (holo-TFIIH) active in transcription. Interacts with PUF60. Interacts with ATF7IP. Interacts with KAT2A; leading to KAT2A recruitment to promoters and acetylation of histones. Part of TBP-based Pol II pre-initiation complex (PIC), in which Pol II core assembles with general transcription factors and other specific initiation factors including GTF2E1, GTF2E2, GTF2F1, GTF2F2, TCEA1, ERCC2, ERCC3, GTF2H2, GTF2H3, GTF2H4, GTF2H5, GTF2A1, GTF2A2, GTF2B and TBP; this large multi-subunit PIC complex mediates DNA unwinding and targets Pol II core to the transcription start site where the first phosphodiester bond forms. (Microbial infection) Interacts with Epstein-Barr virus EBNA2. Post-translationally, phosphorylation on Ser-751 by CK2 controls the 5'-excision activity of ERCC1-XPF endonuclease; phosphorylated protein inhibits the excision activity and thus NER. Dephosphorylation reactivates the 5'-excision step. Phosphorylation has no effect on transcription or the 3'-5' helicase activity.

It localises to the nucleus. It catalyses the reaction Couples ATP hydrolysis with the unwinding of duplex DNA by translocating in the 3'-5' direction.. The enzyme catalyses ATP + H2O = ADP + phosphate + H(+). Its activity is regulated as follows. Phosphorylation on Ser-751 by CK2 controls the 5'-excision activity of ERCC1-XPF endonuclease; phosphorylated protein inhibits the excision activity and thus NER. ATPase activity is stimulated by TFIIH subunit p52 (GTF2H4). DNA translocase activity by this subunit in TFIIH is stimulated by XPA, ERCC5/XPG and XFP plus ERCC1; translocase activity is sensitive to triptolide which targets this enzyme. Functionally, ATP-dependent 3'-5' DNA helicase/translocase. Binds dsDNA rather than ssDNA, unzipping it in a translocase rather than classical helicase activity. Component of the general transcription and DNA repair factor IIH (TFIIH) core complex. When complexed to CDK-activating kinase (CAK), involved in RNA transcription by RNA polymerase II. The ATPase activity of XPB/ERCC3, but not its helicase activity, is required for DNA opening; it may wrap around the damaged DNA wedging it open, causing localized melting that allows XPD/ERCC2 helicase to anchor. In transcription, TFIIH has an essential role in transcription initiation. When the pre-initiation complex (PIC) has been established, TFIIH is required for promoter opening and promoter escape. The ATP-dependent helicase activity of XPB/ERCC3 is required for promoter opening and promoter escape. In transcription pre-initiation complexes induces and propagates a DNA twist to open DNA. Also involved in transcription-coupled nucleotide excision repair (NER) of damaged DNA. In NER, TFIIH acts by opening DNA around the lesion to allow the excision of the damaged oligonucleotide and its replacement by a new DNA fragment. The structure of the TFIIH transcription complex differs from the NER-TFIIH complex; large movements by XPD/ERCC2 and XPB/ERCC3 are stabilized by XPA. XPA retains XPB/ERCC3 at the 5' end of a DNA bubble (mimicking DNA damage). This is General transcription and DNA repair factor IIH helicase/translocase subunit XPB from Homo sapiens (Human).